A 144-amino-acid chain; its full sequence is Fluoride-specific ion channel FluC (144 aa).

Transmembrane regions (helical) follow at residues 7-27, 33-53, 71-91, and 105-125; these read LIVMVGGALGTLARYLVSVAA, FIPWGTILPINALGSFVIGFF, LFVMIGLCGGYTTFSSFSLQT, and VNVAASVILCIGAVALGHITA. Na(+)-binding residues include G79 and T82.

It belongs to the fluoride channel Fluc/FEX (TC 1.A.43) family.

It localises to the cell inner membrane. It catalyses the reaction fluoride(in) = fluoride(out). With respect to regulation, na(+) is not transported, but it plays an essential structural role and its presence is essential for fluoride channel function. In terms of biological role, fluoride-specific ion channel. Important for reducing fluoride concentration in the cell, thus reducing its toxicity. In Gluconobacter oxydans (strain 621H) (Gluconobacter suboxydans), this protein is Fluoride-specific ion channel FluC.